The chain runs to 253 residues: Isoprenyl transferase (253 aa).

Aspartate 30 is an active-site residue. Aspartate 30 provides a ligand contact to Mg(2+). Substrate is bound by residues 31 to 34 (GNRR), tryptophan 35, histidine 51, and 79 to 81 (STE). Asparagine 82 serves as the catalytic Proton acceptor. Substrate contacts are provided by residues phenylalanine 83, arginine 85, arginine 202, and 208-210 (RVS). A Mg(2+)-binding site is contributed by glutamate 221.

Belongs to the UPP synthase family. As to quaternary structure, homodimer. The cofactor is Mg(2+).

Functionally, catalyzes the condensation of isopentenyl diphosphate (IPP) with allylic pyrophosphates generating different type of terpenoids. This chain is Isoprenyl transferase, found in Chlamydia trachomatis serovar D (strain ATCC VR-885 / DSM 19411 / UW-3/Cx).